The sequence spans 123 residues: Small ribosomal subunit protein uS12c (123 aa).

Belongs to the universal ribosomal protein uS12 family. Part of the 30S ribosomal subunit.

It localises to the plastid. Its subcellular location is the chloroplast. Its function is as follows. With S4 and S5 plays an important role in translational accuracy. Located at the interface of the 30S and 50S subunits. The polypeptide is Small ribosomal subunit protein uS12c (rps12) (Chlorella vulgaris (Green alga)).